Here is a 390-residue protein sequence, read N- to C-terminus: Magnesium-protoporphyrin IX monomethyl ester [oxidative] cyclase (390 aa).

It belongs to the AcsF family. It depends on Fe cation as a cofactor.

The catalysed reaction is Mg-protoporphyrin IX 13-monomethyl ester + 3 NADPH + 3 O2 + 2 H(+) = 3,8-divinyl protochlorophyllide a + 3 NADP(+) + 5 H2O. It functions in the pathway porphyrin-containing compound metabolism; chlorophyll biosynthesis (light-independent). Functionally, catalyzes the formation of the isocyclic ring in chlorophyll biosynthesis. Mediates the cyclase reaction, which results in the formation of divinylprotochlorophyllide (Pchlide) characteristic of all chlorophylls from magnesium-protoporphyrin IX 13-monomethyl ester (MgPMME). In Prochlorococcus marinus (strain MIT 9312), this protein is Magnesium-protoporphyrin IX monomethyl ester [oxidative] cyclase.